Reading from the N-terminus, the 476-residue chain is ATP synthase subunit beta (476 aa).

154-161 (GGAGVGKT) is a binding site for ATP.

This sequence belongs to the ATPase alpha/beta chains family. F-type ATPases have 2 components, CF(1) - the catalytic core - and CF(0) - the membrane proton channel. CF(1) has five subunits: alpha(3), beta(3), gamma(1), delta(1), epsilon(1). CF(0) has three main subunits: a(1), b(2) and c(9-12). The alpha and beta chains form an alternating ring which encloses part of the gamma chain. CF(1) is attached to CF(0) by a central stalk formed by the gamma and epsilon chains, while a peripheral stalk is formed by the delta and b chains.

The protein localises to the cell inner membrane. The catalysed reaction is ATP + H2O + 4 H(+)(in) = ADP + phosphate + 5 H(+)(out). Produces ATP from ADP in the presence of a proton gradient across the membrane. The catalytic sites are hosted primarily by the beta subunits. This is ATP synthase subunit beta from Nitrobacter winogradskyi (strain ATCC 25391 / DSM 10237 / CIP 104748 / NCIMB 11846 / Nb-255).